The chain runs to 218 residues: Adenylate kinase (218 aa).

10–15 (GAGKGT) is a binding site for ATP. An NMP region spans residues 30–59 (STGDMLRAAIAKGTPLGLSAQKIMESGGLV). AMP contacts are provided by residues threonine 31, arginine 36, 57-59 (GLV), 85-88 (GFPR), and glutamine 92. The tract at residues 122–159 (GRRIHQPSGRVYHVVNQPPKNPGVDDITGEPLIQRDDD) is LID. ATP contacts are provided by residues arginine 123 and 132-133 (VY). The AMP site is built by arginine 156 and arginine 167. Glycine 203 lines the ATP pocket.

It belongs to the adenylate kinase family. As to quaternary structure, monomer.

It is found in the cytoplasm. It carries out the reaction AMP + ATP = 2 ADP. The protein operates within purine metabolism; AMP biosynthesis via salvage pathway; AMP from ADP: step 1/1. Functionally, catalyzes the reversible transfer of the terminal phosphate group between ATP and AMP. Plays an important role in cellular energy homeostasis and in adenine nucleotide metabolism. This chain is Adenylate kinase, found in Legionella pneumophila (strain Corby).